The sequence spans 380 residues: cAMP-dependent protein kinase type I-alpha regulatory subunit (380 aa).

The residue at position 1 (Met1) is an N-acetylmethionine. Ala2 is modified (N-acetylalanine; in cAMP-dependent protein kinase type I-alpha regulatory subunit, N-terminally processed). A dimerization and phosphorylation region spans residues 2–135; that stretch reads ASGTTASEEE…ALAKAIEKNV (134 aa). Phosphoserine is present on residues Ser3, Ser76, and Ser82. Positions 64–96 are disordered; that stretch reads IQNLQKAGSRADSREDEISPPPPNPVVKGRRRR. Residues 95 to 99 carry the Pseudophosphorylation motif motif; the sequence is RRGAI. Phosphoserine is present on Ser100. 3',5'-cyclic AMP-binding positions include 136–253, Glu201, Arg210, 254–380, Glu325, and Arg334; these read LFSH…SKVS and ILES…SLSV. Residue Ser257 is modified to Phosphoserine.

This sequence belongs to the cAMP-dependent kinase regulatory chain family. As to quaternary structure, the inactive holoenzyme is composed of two regulatory chains and two catalytic chains. Activation by cAMP releases the two active catalytic monomers and the regulatory dimer. Interacts with PRKACA and PRKACB. PRKAR1A also interacts with RFC2; the complex may be involved in cell survival. Interacts with AKAP4. Interacts with RARA; the interaction occurs in the presence of cAMP or FSH and regulates RARA transcriptional activity. Interacts with the phosphorylated form of PJA2. Interacts with CBFA2T3. Interacts with PRKX; regulates this cAMP-dependent protein kinase. Interacts with smAKAP; this interaction may target PRKAR1A to the plasma membrane. Interacts with AICDA. In terms of processing, the pseudophosphorylation site binds to the substrate-binding region of the catalytic chain, resulting in the inhibition of its activity. The physiological significance of the in vitro phosphorylation of a proximal serine is unclear. Four types of regulatory chains are found: I-alpha, I-beta, II-alpha, and II-beta. Their expression varies among tissues and is in some cases constitutive and in others inducible.

It localises to the cell membrane. Its function is as follows. Regulatory subunit of the cAMP-dependent protein kinases involved in cAMP signaling in cells. This chain is cAMP-dependent protein kinase type I-alpha regulatory subunit (PRKAR1A), found in Bos taurus (Bovine).